Here is a 530-residue protein sequence, read N- to C-terminus: MPMSLGNAFIKNFLGKAPDWYKLAIISFLIINPFVFFLVDPFVAGWLLVVEFIFTLAMALKCYPLQPGGLLAIQAVAIGMTKPEMVYHELQANLPVLLLLVFMVAGIYFMKELLLFIFTKILLGIQSKILLSVAFCVAAAFLSAFLDALTVIAVVISVAVGFYSIYHKVASGKGTTSAHDHTHDEEISELTRDDLENYRAFLRSLLMHAGVGTALGGVMTMVGEPQNLVIAKQAGWEFGEFIIRMLPVTLPVFFCGILTCALVEKFKVFGYGAELPNNVRQILVEFDNKERANRTKQDVAKLWVQSAIAVWLIVGLALHVAEVGLIGLSVIILATAFTGVIEEHSMGKAFEEALPFTALLAVFFAVVAVIIDQALFKPVIDAVLHVEDKGAQLALFYVANGILSMVSDNVFVGTVYINEVKTALVEGVITRDQFDLLAVAINTGTNLPSVATPNGQAAFLFLLTSALAPLIRLSYGRMVIMALPYTIVLALVGLAGIVFFVEPMTAWFYDAGWIIHRTGEVVAPVISGGH.

A run of 12 helical transmembrane segments spans residues 13–33, 98–118, 123–145, 149–166, 205–225, 238–258, 308–328, 330–350, 356–376, 393–413, 451–471, and 480–500; these read FLGK…IINP, LLLV…LFIF, LGIQ…LSAF, LTVI…YSIY, LLMH…VGEP, FGEF…CGIL, IAVW…LIGL, VIIL…GKAF, FTAL…QALF, LALF…VFVG, ATPN…APLI, and IMAL…IVFF.

The protein belongs to the NhaB Na(+)/H(+) (TC 2.A.34) antiporter family.

Its subcellular location is the cell inner membrane. It catalyses the reaction 2 Na(+)(in) + 3 H(+)(out) = 2 Na(+)(out) + 3 H(+)(in). Its function is as follows. Na(+)/H(+) antiporter that extrudes sodium in exchange for external protons. In Vibrio atlanticus (strain LGP32) (Vibrio splendidus (strain Mel32)), this protein is Na(+)/H(+) antiporter NhaB.